The sequence spans 1244 residues: Putative late blight resistance protein homolog R1A-4 (1244 aa).

Coiled coils occupy residues 411 to 434 (RYSD…ESLQ) and 526 to 548 (PRMN…QLLN). The NB-ARC domain maps to 527-755 (RMNEEIVGFK…ECWEQVANDL (229 aa)). 560–567 (GMPGLGKT) is an ATP binding site. LRR repeat units follow at residues 978–1004 (LWNL…VWDM), 1079–1103 (PIRL…ISAP), 1127–1150 (LKNL…KVSN), 1153–1178 (FPQL…AFPN), and 1213–1237 (ESVV…NFKL).

Belongs to the disease resistance NB-LRR family.

It localises to the cytoplasm. It is found in the membrane. Its function is as follows. Confers resistance to late blight (Phytophthora infestans) races carrying the avirulence gene Avr1. Resistance proteins guard the plant against pathogens that contain an appropriate avirulence protein via an indirect interaction with this avirulence protein. That triggers a defense system including the hypersensitive response, which restricts the pathogen growth. The chain is Putative late blight resistance protein homolog R1A-4 (R1A-4) from Solanum demissum (Wild potato).